A 258-amino-acid chain; its full sequence is Thrombin-like enzyme ancrod-2 (258 aa).

An N-terminal signal peptide occupies residues 1 to 18; that stretch reads MVLIRVLANLVILQLSYA. A propeptide spanning residues 19 to 24 is cleaved from the precursor; it reads QKSSEL. A Peptidase S1 domain is found at 25–251; it reads VIGGDECNIN…HLHWILSIMA (227 aa). 6 disulfide bridges follow: Cys-31-Cys-165, Cys-52-Cys-68, Cys-102-Cys-256, Cys-144-Cys-212, Cys-176-Cys-191, and Cys-202-Cys-227. Active-site charge relay system residues include His-67 and Asp-112. 2 N-linked (GlcNAc...) asparagine glycosylation sites follow: Asn-123 and Asn-172. Residue Ser-206 is the Charge relay system of the active site. Asn-253 is a glycosylation site (N-linked (GlcNAc...) asparagine).

It belongs to the peptidase S1 family. Snake venom subfamily. As to quaternary structure, monomer. In terms of tissue distribution, expressed by the venom gland.

The protein resides in the secreted. It catalyses the reaction Selective cleavage of Arg-|-Xaa bond in fibrinogen, to form fibrin, and release fibrinopeptide A. The specificity of further degradation of fibrinogen varies with species origin of the enzyme.. Its function is as follows. Thrombin-like snake venom serine protease. Cleaves fibrinogen (FGA) to split of fibrinopeptides AM, AO, and AY; the aberrant fibrinogen is then incapable of being cross-linked, forming easily dispersible clots. This chain is Thrombin-like enzyme ancrod-2, found in Calloselasma rhodostoma (Malayan pit viper).